The chain runs to 208 residues: Cysteine-rich protein 2 (208 aa).

In terms of domain architecture, LIM zinc-binding 1 spans 5–57 (CPKCDKTVCFAEKVSSLGKDWHKFCLKCERCSKTLTPGGHAEHDGKPFCHKPC). Position 23 is an N6-acetyllysine (K23). The segment at 98 to 119 (AEERKASGPPKGPSRASSVTTF) is disordered. At S104 the chain carries Phosphoserine. An LIM zinc-binding 2 domain is found at 126–178 (CPRCSKKVYFAEKVTSLGKDWHRPCLHCERCGKTLTPGGHAEHDGQPYCHKPC). K138 and K144 each carry N6-acetyllysine.

In terms of assembly, interacts with TGFB1I1.

This is Cysteine-rich protein 2 (CRIP2) from Pongo abelii (Sumatran orangutan).